Consider the following 1004-residue polypeptide: Hyaluronate lyase HylB (1004 aa).

The N-terminal stretch at 1–29 (MKNRKIWVMLVGLFTALTNGFMGTTLTFA) is a signal peptide. Residues histidine 468, tyrosine 477, and arginine 531 contribute to the active site.

This sequence belongs to the polysaccharide lyase 8 family.

Its subcellular location is the secreted. The catalysed reaction is [hyaluronan](n) = n 3-(4-deoxy-beta-D-gluc-4-enuronosyl)-N-acetyl-D-glucosamine + H2O. It catalyses the reaction Eliminative degradation of polysaccharides containing 1,4-beta-D-hexosaminyl and 1,3-beta-D-glucuronosyl linkages to disaccharides containing 4-deoxy-beta-D-gluc-4-enuronosyl groups.. In terms of biological role, degrades hyaluronic acid (HA) and chondroitin sulfate (CS) A in vitro. Is not active against heparin sodium salt (HS). Involved in the pathogenesis of vancomycin-resistant E.faecalis infections. Contributes to attenuation of the lipopolysaccharide (LPS)-mediated nuclear factor (NF)-kappa-B activation assayed in the mouse RAW-Blue reporter macrophages. This chain is Hyaluronate lyase HylB, found in Enterococcus faecalis (strain ATCC 700802 / V583).